The sequence spans 74 residues: ATP synthase subunit c (74 aa).

2 helical membrane-spanning segments follow: residues 8-28 and 52-72; these read FIGA…VGNI and IGFA…LMVL.

Belongs to the ATPase C chain family. F-type ATPases have 2 components, F(1) - the catalytic core - and F(0) - the membrane proton channel. F(1) has five subunits: alpha(3), beta(3), gamma(1), delta(1), epsilon(1). F(0) has three main subunits: a(1), b(2) and c(10-14). The alpha and beta chains form an alternating ring which encloses part of the gamma chain. F(1) is attached to F(0) by a central stalk formed by the gamma and epsilon chains, while a peripheral stalk is formed by the delta and b chains.

It is found in the cell inner membrane. Functionally, f(1)F(0) ATP synthase produces ATP from ADP in the presence of a proton or sodium gradient. F-type ATPases consist of two structural domains, F(1) containing the extramembraneous catalytic core and F(0) containing the membrane proton channel, linked together by a central stalk and a peripheral stalk. During catalysis, ATP synthesis in the catalytic domain of F(1) is coupled via a rotary mechanism of the central stalk subunits to proton translocation. Key component of the F(0) channel; it plays a direct role in translocation across the membrane. A homomeric c-ring of between 10-14 subunits forms the central stalk rotor element with the F(1) delta and epsilon subunits. The chain is ATP synthase subunit c from Paramagnetospirillum magneticum (strain ATCC 700264 / AMB-1) (Magnetospirillum magneticum).